Reading from the N-terminus, the 532-residue chain is Type 2 DNA topoisomerase 6 subunit B (532 aa).

ATP is bound by residues Asn-41, Asp-75, 96–97, 105–112, and Lys-427; these read SK and GMYGLGVK.

It belongs to the TOP6B family. In terms of assembly, homodimer. Heterotetramer of two Top6A and two Top6B chains.

It carries out the reaction ATP-dependent breakage, passage and rejoining of double-stranded DNA.. In terms of biological role, relaxes both positive and negative superturns and exhibits a strong decatenase activity. The sequence is that of Type 2 DNA topoisomerase 6 subunit B from Sulfurisphaera tokodaii (strain DSM 16993 / JCM 10545 / NBRC 100140 / 7) (Sulfolobus tokodaii).